We begin with the raw amino-acid sequence, 231 residues long: Large ribosomal subunit protein uL1 (231 aa).

This sequence belongs to the universal ribosomal protein uL1 family. Part of the 50S ribosomal subunit.

Functionally, binds directly to 23S rRNA. The L1 stalk is quite mobile in the ribosome, and is involved in E site tRNA release. Protein L1 is also a translational repressor protein, it controls the translation of the L11 operon by binding to its mRNA. The chain is Large ribosomal subunit protein uL1 from Francisella tularensis subsp. tularensis (strain WY96-3418).